The primary structure comprises 450 residues: Probable rhamnogalacturonase E (450 aa).

Positions 1-22 (MTWSTSFLSVHFFAFITTSIHA) are cleaved as a signal peptide. Cysteine 43 and cysteine 69 form a disulfide bridge. N-linked (GlcNAc...) asparagine glycosylation is found at asparagine 54, asparagine 92, and asparagine 131. The Proton donor role is filled by aspartate 222. A disulfide bridge links cysteine 224 with cysteine 241. N-linked (GlcNAc...) asparagine glycans are attached at residues asparagine 242 and asparagine 257. Residue histidine 297 is part of the active site. N-linked (GlcNAc...) asparagine glycosylation is found at asparagine 324 and asparagine 329. Cystine bridges form between cysteine 347/cysteine 353 and cysteine 375/cysteine 384.

Belongs to the glycosyl hydrolase 28 family.

It is found in the secreted. In terms of biological role, pectinolytic enzymes consist of four classes of enzymes: pectine lyase, polygalacturonase, pectin methylesterase and rhamnogalacturonase. Hydrolyzes alpha-D-galacturonopyranosyl-(1,2)-alpha-L-rhamnopyranosyl linkages in the backbone of the hairy regions of pectins. The protein is Probable rhamnogalacturonase E (rhgE) of Aspergillus niger.